The primary structure comprises 246 residues: NLP effector protein Pc118548 (246 aa).

The first 19 residues, 1 to 19, serve as a signal peptide directing secretion; sequence MNFRAFLLAAIAGIATINA. Residues 122 to 128 carry the Hepta-peptide GHRHDWE motif motif; that stretch reads GHRHYWE. N-linked (GlcNAc...) asparagine glycosylation occurs at Asn141.

It belongs to the Necrosis inducing protein (NPP1) family.

The protein localises to the secreted. Secreted effector that contributes strongly to virulence during infection by P.capsici. Induces cell death in the Solanaceae, including Nicotiana benthamiana and hot pepper. This is NLP effector protein Pc118548 from Phytophthora capsici.